Here is a 166-residue protein sequence, read N- to C-terminus: 3-isopropylmalate dehydratase small subunit (166 aa).

This sequence belongs to the LeuD family. LeuD type 2 subfamily. In terms of assembly, heterodimer of LeuC and LeuD.

It catalyses the reaction (2R,3S)-3-isopropylmalate = (2S)-2-isopropylmalate. It participates in amino-acid biosynthesis; L-leucine biosynthesis; L-leucine from 3-methyl-2-oxobutanoate: step 2/4. Its function is as follows. Catalyzes the isomerization between 2-isopropylmalate and 3-isopropylmalate, via the formation of 2-isopropylmaleate. The polypeptide is 3-isopropylmalate dehydratase small subunit (Heliobacterium modesticaldum (strain ATCC 51547 / Ice1)).